The primary structure comprises 140 residues: Large-conductance mechanosensitive channel (140 aa).

The next 3 membrane-spanning stretches (helical) occupy residues 7-27 (EFAF…GAAF), 30-50 (IITS…FGTV), and 64-84 (GLFV…FLFV).

The protein belongs to the MscL family. As to quaternary structure, homopentamer.

It localises to the cell membrane. Channel that opens in response to stretch forces in the membrane lipid bilayer. May participate in the regulation of osmotic pressure changes within the cell. In Staphylococcus carnosus (strain TM300), this protein is Large-conductance mechanosensitive channel.